Consider the following 49-residue polypeptide: Large ribosomal subunit protein bL33 (49 aa).

This sequence belongs to the bacterial ribosomal protein bL33 family.

The chain is Large ribosomal subunit protein bL33 from Carboxydothermus hydrogenoformans (strain ATCC BAA-161 / DSM 6008 / Z-2901).